The primary structure comprises 116 residues: T cell receptor alpha variable 19 (116 aa).

Residues 1–21 form the signal peptide; that stretch reads MLTASLLRAVIASICVVSSMA. Residues 22-116 enclose the Ig-like domain; that stretch reads QKVTQAQTEI…SAVYFCALSE (95 aa). Cysteines 43 and 112 form a disulfide. Residue asparagine 96 is glycosylated (N-linked (GlcNAc...) asparagine).

As to quaternary structure, alpha-beta TR is a heterodimer composed of an alpha and beta chain; disulfide-linked. The alpha-beta TR is associated with the transmembrane signaling CD3 coreceptor proteins to form the TR-CD3 (TcR or TCR). The assembly of alpha-beta TR heterodimers with CD3 occurs in the endoplasmic reticulum where a single alpha-beta TR heterodimer associates with one CD3D-CD3E heterodimer, one CD3G-CD3E heterodimer and one CD247 homodimer forming a stable octameric structure. CD3D-CD3E and CD3G-CD3E heterodimers preferentially associate with TR alpha and TR beta chains, respectively. The association of the CD247 homodimer is the last step of TcR assembly in the endoplasmic reticulum and is required for transport to the cell surface.

The protein localises to the cell membrane. Its function is as follows. V region of the variable domain of T cell receptor (TR) alpha chain that participates in the antigen recognition. Alpha-beta T cell receptors are antigen specific receptors which are essential to the immune response and are present on the cell surface of T lymphocytes. Recognize peptide-major histocompatibility (MH) (pMH) complexes that are displayed by antigen presenting cells (APC), a prerequisite for efficient T cell adaptive immunity against pathogens. Binding of alpha-beta TR to pMH complex initiates TR-CD3 clustering on the cell surface and intracellular activation of LCK that phosphorylates the ITAM motifs of CD3G, CD3D, CD3E and CD247 enabling the recruitment of ZAP70. In turn ZAP70 phosphorylates LAT, which recruits numerous signaling molecules to form the LAT signalosome. The LAT signalosome propagates signal branching to three major signaling pathways, the calcium, the mitogen-activated protein kinase (MAPK) kinase and the nuclear factor NF-kappa-B (NF-kB) pathways, leading to the mobilization of transcription factors that are critical for gene expression and essential for T cell growth and differentiation. The T cell repertoire is generated in the thymus, by V-(D)-J rearrangement. This repertoire is then shaped by intrathymic selection events to generate a peripheral T cell pool of self-MH restricted, non-autoaggressive T cells. Post-thymic interaction of alpha-beta TR with the pMH complexes shapes TR structural and functional avidity. In Homo sapiens (Human), this protein is T cell receptor alpha variable 19.